Reading from the N-terminus, the 240-residue chain is Glutamine transport ATP-binding protein GlnQ (240 aa).

An ABC transporter domain is found at 2–236 (IEFKNVSKHF…PPSQRLQEFL (235 aa)). 34 to 41 (GPSGSGKS) is an ATP binding site.

Belongs to the ABC transporter superfamily. In terms of assembly, heterotetramer with 2 subunits of GlnQ and 2 subunits of GlnP.

Its subcellular location is the cell inner membrane. Its function is as follows. Part of the binding-protein-dependent transport system for glutamine. Probably responsible for energy coupling to the transport system. The polypeptide is Glutamine transport ATP-binding protein GlnQ (glnQ) (Escherichia coli (strain K12)).